A 334-amino-acid polypeptide reads, in one-letter code: MARDEVRRILPADIKREVLIKDEKAETNPKWGFPPEKRPMEMHMQFGIINLDKPPGPTSHEVVAWVKKLFNLNKAGHGGTLDPKVSGVLPVALERATRVVQALLPAGKEYVALMHLHGEVPEDKIYAVMKEFEGEIIQRPPLRSAVKRRLRTRKVYYIEILEIDGKDVLFRVGVEAGTYIRSLIHHIGLALGVGAHMAELRRTRSGPFKEDETLVTLHDLVDYYHFWKEDGIEEYFRKAIQPMEKAVEHLPKVWIRDSAVAAVTHGADLAVPGIVKVHKGIKKGDLVAVMTLKDELVALGKATMTSGEMLQKSKGIAVDVDKVFMPRDWYPKLW.

Asp-82 functions as the Nucleophile in the catalytic mechanism. The 76-residue stretch at 250 to 325 (LPKVWIRDSA…IAVDVDKVFM (76 aa)) folds into the PUA domain.

This sequence belongs to the pseudouridine synthase TruB family. Type 2 subfamily.

The enzyme catalyses uridine(55) in tRNA = pseudouridine(55) in tRNA. In terms of biological role, could be responsible for synthesis of pseudouridine from uracil-55 in the psi GC loop of transfer RNAs. The polypeptide is Probable tRNA pseudouridine synthase B (Thermococcus onnurineus (strain NA1)).